Here is a 223-residue protein sequence, read N- to C-terminus: Probable chemoreceptor glutamine deamidase CheD (223 aa).

Residues Gln-189–Ser-223 form a disordered region.

This sequence belongs to the CheD family.

The enzyme catalyses L-glutaminyl-[protein] + H2O = L-glutamyl-[protein] + NH4(+). Its function is as follows. Probably deamidates glutamine residues to glutamate on methyl-accepting chemotaxis receptors (MCPs), playing an important role in chemotaxis. The sequence is that of Probable chemoreceptor glutamine deamidase CheD from Bordetella petrii (strain ATCC BAA-461 / DSM 12804 / CCUG 43448).